We begin with the raw amino-acid sequence, 157 residues long: Protein Smg homolog (157 aa).

Belongs to the Smg family.

In Shewanella sediminis (strain HAW-EB3), this protein is Protein Smg homolog.